The sequence spans 332 residues: Potassium channel subfamily K member 17 (332 aa).

At 1–20 (MYRPRARAAPEGRVRGCAVP) the chain is on the cytoplasmic side. Residues 21 to 43 (STVLLLLAYLAYLALGTGVFWTL) traverse the membrane as a helical segment. N-linked (GlcNAc...) asparagine glycans are attached at residues Asn65 and Asn94. The pore-forming intramembrane region spans 106 to 124 (SFFFSVSTITTIGYGNLSP). The K(+) site is built by Thr116, Ile117, Gly118, and Tyr119. The segment at 116 to 121 (TIGYGN) is selectivity filter 1. The chain crosses the membrane as a helical span at residues 128–148 (AARLFCIFFALVGIPLNLVVL). The Cytoplasmic segment spans residues 149–179 (NRLGHLMQQGVNHWASRLGGTWQDPDKARWL). A helical transmembrane segment spans residues 180-200 (AGSGALLSGLLLFLLLPPLLF). The segment at residues 211-230 (GFYFAFITLSTVGFGDYVIG) is an intramembrane region (pore-forming). K(+) contacts are provided by Thr221, Val222, Gly223, and Phe224. The selectivity filter 2 stretch occupies residues 221–226 (TVGFGD). Residues 244–264 (MVSLWILFGMAWLALIIKLIL) form a helical membrane-spanning segment. Residues 265 to 332 (SQLETPGRVC…AHAAGCGKDS (68 aa)) are Cytoplasmic-facing. Positions 287-312 (SQSWRQGPDREPESHSPQQGCYPEGP) are disordered.

The protein belongs to the two pore domain potassium channel (TC 1.A.1.8) family. In terms of assembly, homodimer; disulfide-linked. Heterodimer with KCNK5 and KCNK16. In terms of tissue distribution, widely expressed. Highly expressed in aorta and coronary artery. Expressed in pancreas, in both endocrine (alpha, beta, gamma, delta, and epsilon) and exocrine (acinar and ductal) cells.

The protein localises to the cell membrane. The catalysed reaction is K(+)(in) = K(+)(out). The enzyme catalyses Rb(+)(in) = Rb(+)(out). It carries out the reaction Cs(+)(in) = Cs(+)(out). Inhibited by Ba(2+), quinidine, chloroform and halothane. Activated at alkaline pH. Activated by quinine and isoflurane. K(+) channel that conducts voltage-dependent outward rectifying currents upon membrane depolarization. Voltage sensing is coupled to K(+) electrochemical gradient in an 'ion flux gating' mode where outward but not inward ion flow opens the gate. Homo- and heterodimerizes to form functional channels with distinct regulatory and gating properties. Present in the cardiac conduction system where it may regulate action potential duration and beating frequency of cardiac myocytes. Permeable to other monovalent cations such as Rb(+) and Cs(+). The polypeptide is Potassium channel subfamily K member 17 (Homo sapiens (Human)).